A 172-amino-acid polypeptide reads, in one-letter code: C-phycocyanin beta chain (172 aa).

Position 72 is an N4-methylasparagine (asparagine 72). The (2R,3E)-phycocyanobilin site is built by cysteine 82 and cysteine 153.

Belongs to the phycobiliprotein family. In terms of assembly, heterodimer of an alpha and a beta subunit, which further assembles into trimers and the trimers into hexamers. The basic functional unit of phycobiliproteins is a ring-shaped hexamer formed from two back-to-back trimers contacting via the alpha chain subunits. The trimers are composed of alpha/beta subunit heterodimers arranged around a three-fold axis of symmetry. The phycoerythrins also contain a gamma subunit which is located in the center of the hexamer. In terms of processing, contains two covalently linked bilin chromophores.

It localises to the plastid. Its subcellular location is the chloroplast thylakoid membrane. Its function is as follows. Light-harvesting photosynthetic bile pigment-protein from the phycobiliprotein complex (phycobilisome, PBS). Phycocyanin is the major phycobiliprotein in the PBS rod. The protein is C-phycocyanin beta chain (cpcB) of Aglaothamnion neglectum (Red alga).